Here is a 414-residue protein sequence, read N- to C-terminus: CinA-like protein (414 aa).

This sequence belongs to the CinA family.

The polypeptide is CinA-like protein (Koribacter versatilis (strain Ellin345)).